Consider the following 650-residue polypeptide: Protein ANTI-SILENCING 1 (650 aa).

The region spanning 38-169 (DEYRLYDCVL…VGSCKVVDTI (132 aa)) is the BAH domain. 4 disordered regions span residues 202-223 (NGKS…GSVR), 229-248 (AFES…EKEK), 257-359 (KSTL…QKLD), and 425-448 (VTEK…ADDN). 2 stretches are compositionally biased toward basic and acidic residues: residues 259 to 270 (TLAEERSNKDSG) and 277 to 287 (NGKDQESEVKK). Residues 302 to 315 (SNSFEASGSRTIHS) show a composition bias toward polar residues. Basic and acidic residues-rich tracts occupy residues 348-358 (LDDRPLKKQKL) and 438-448 (RAEDKMSADDN). Residues 486–569 (TVVLLQNLDP…RPLVASFAKI (84 aa)) enclose the RRM domain.

Component of the ASI1-AIPP1-EDM2 (AAE) RNA regulatory complex composed of at least AIPP1/EDM3, ASI1 and EDM2 and may contain CPL2, AIPP2 and AIPP3/BDT1. Binds directly to AIPP1/EDM3 and AIPP2.

Collaboratively with AIPP1/EDM3 and EDM2, the AAE complex regulates alternative RNA processing (e.g. alternative splicing) and epigenetic silencing (e.g. H3K9me2) of intronic heterochromatin-containing genes as well as genic heterochromatin-containing genes by promoting distal 3' polyadenylation; may associate with intronic heterochromatin and bind gene transcripts to modulate polyadenylation. Required to prevent promoter DNA hypermethylation and transcriptional silencing of some transgenes. Plays a similar role to that of the histone H3K9 demethylase JMJ25/IBM1 in preventing CHG methylation in the bodies of numerous genes. RNA-binding protein that ensures the proper expression of JMJ25/IBM1 full-length transcript by associating with an intronic heterochromatic repeat element of JMJ25/IBM1. Also modulates transposable elements (TE) expression. Contributes to a unique mechanism to deal with the collateral effect of silencing intronic repeat elements. This chain is Protein ANTI-SILENCING 1, found in Arabidopsis thaliana (Mouse-ear cress).